The chain runs to 184 residues: 1,6-anhydro-N-acetylmuramyl-L-alanine amidase AmpD (184 aa).

An N-acetylmuramoyl-L-alanine amidase domain is found at 30–171; that stretch reads QDISLLVIHY…ISPKRKIDPG (142 aa). Histidine 38 provides a ligand contact to Zn(2+). The Proton acceptor role is filled by glutamate 120. Histidine 159 and aspartate 169 together coordinate Zn(2+).

This sequence belongs to the N-acetylmuramoyl-L-alanine amidase 2 family. The cofactor is Zn(2+).

The protein localises to the cytoplasm. It catalyses the reaction Hydrolyzes the link between N-acetylmuramoyl residues and L-amino acid residues in certain cell-wall glycopeptides.. Involved in cell wall peptidoglycan recycling. Specifically cleaves the amide bond between the lactyl group of N-acetylmuramic acid and the alpha-amino group of the L-alanine in degradation products containing an anhydro N-acetylmuramyl moiety. This is 1,6-anhydro-N-acetylmuramyl-L-alanine amidase AmpD (ampD) from Haemophilus influenzae (strain ATCC 51907 / DSM 11121 / KW20 / Rd).